The sequence spans 423 residues: Kynureninase (423 aa).

Residues L105, S106, 133–136 (FPSD), D218, H221, and Y243 each bind pyridoxal 5'-phosphate. K244 is subject to N6-(pyridoxal phosphate)lysine. 2 residues coordinate pyridoxal 5'-phosphate: W273 and N301.

The protein belongs to the kynureninase family. Homodimer. Requires pyridoxal 5'-phosphate as cofactor.

It catalyses the reaction L-kynurenine + H2O = anthranilate + L-alanine + H(+). The catalysed reaction is 3-hydroxy-L-kynurenine + H2O = 3-hydroxyanthranilate + L-alanine + H(+). It functions in the pathway amino-acid degradation; L-kynurenine degradation; L-alanine and anthranilate from L-kynurenine: step 1/1. Its pathway is cofactor biosynthesis; NAD(+) biosynthesis; quinolinate from L-kynurenine: step 2/3. Its function is as follows. Catalyzes the cleavage of L-kynurenine (L-Kyn) and L-3-hydroxykynurenine (L-3OHKyn) into anthranilic acid (AA) and 3-hydroxyanthranilic acid (3-OHAA), respectively. This Xanthomonas oryzae pv. oryzae (strain PXO99A) protein is Kynureninase.